Consider the following 206-residue polypeptide: Uridine kinase (206 aa).

9-16 (GGSGSGKT) serves as a coordination point for ATP.

Belongs to the uridine kinase family.

It localises to the cytoplasm. It catalyses the reaction uridine + ATP = UMP + ADP + H(+). The catalysed reaction is cytidine + ATP = CMP + ADP + H(+). Its pathway is pyrimidine metabolism; CTP biosynthesis via salvage pathway; CTP from cytidine: step 1/3. The protein operates within pyrimidine metabolism; UMP biosynthesis via salvage pathway; UMP from uridine: step 1/1. The sequence is that of Uridine kinase from Borrelia duttonii (strain Ly).